We begin with the raw amino-acid sequence, 2383 residues long: Reducing polyketide synthase rdc5 (2383 aa).

Positions 10-438 constitute a Ketosynthase family 3 (KS3) domain; sequence RAPIAIIGMS…GTNAHLVLER (429 aa). Residues Cys186, His321, and His361 each act as for beta-ketoacyl synthase activity in the active site. The interval 550 to 881 is malonyl-CoA:ACP transacylase (MAT) domain; sequence FVFTGQGAQW…GFAAELFRRG (332 aa). The N-terminal hotdog fold stretch occupies residues 930-1066; that stretch reads KSLIGAERPS…GLFSINYEDS (137 aa). Positions 930–1253 constitute a PKS/mFAS DH domain; the sequence is KSLIGAERPS…LAELEVEDAD (324 aa). Positions 932-1250 are dehydratase (DH) domain; the sequence is LIGAERPSLD…DFHLAELEVE (319 aa). His962 acts as the Proton acceptor; for dehydratase activity in catalysis. The interval 1094–1253 is C-terminal hotdog fold; it reads VEVISKQAFY…LAELEVEDAD (160 aa). Asp1160 (proton donor; for dehydratase activity) is an active-site residue. An enoyl reductase (ER) domain region spans residues 1663 to 1977; sequence GLLNTLHFVS…QGKHVGKMIL (315 aa). Cys1776 serves as the catalytic Phosphocysteine intermediate. A ketoreductase (KR) domain region spans residues 2002 to 2182; the sequence is ATYLFIGGLG…VSVNLGIMRD (181 aa). One can recognise a Carrier domain in the interval 2300 to 2377; sequence AAGPIITKAL…QFAVQIAKKS (78 aa). Position 2337 is an O-(pantetheine 4'-phosphoryl)serine (Ser2337).

Its pathway is secondary metabolite biosynthesis. Reducing polyketide synthase; part of the gene cluster that mediates the biosynthesis of radicicol, a resorcylic acid lactone (RAL) that irreversibly inhibits the HSP90 molecular chaperone, an important target for cancer chemotherapy. The radicicol cluster encodes only two apparent post-PKS enzymes, a cytochrome P450 monooxygenase (rdc4) and a non-heme halogenase (rdc2) that could introduce the epoxide and the chlorine, respectively. If this cluster includes all the genes required for radicicol biosynthesis, the remaining structural features of radicicol are presumably generated by the PKSs rdc1 and rdc5. The C-2' ketone could arise if the R-PKS rdc5 and NR-PKS rdc1 each carry out four iterations, in contrast to the five iteration-three iteration split for the hypothemycin PKSs. The origin of the cis 5',6' double bond is not known. The radicicol R-PKS rdc5 ER domain may catalyze either double bond isomerization or reduction in the third iteration. This is Reducing polyketide synthase rdc5 from Metacordyceps chlamydosporia (Nematophagous fungus).